Here is a 246-residue protein sequence, read N- to C-terminus: Auxin-responsive protein IAA25 (246 aa).

A disordered region spans residues 1–22; that stretch reads MKSSSVAPRLKQERQDDCKFQE. The segment covering 10–22 has biased composition (basic and acidic residues); sequence LKQERQDDCKFQE. Residues 28 to 32 carry the EAR-like (transcriptional repression) motif; the sequence is LELRL. The 96-residue stretch at 143–238 folds into the PB1 domain; the sequence is TMFVKVNLEG…SVKRLYIAQD (96 aa).

This sequence belongs to the Aux/IAA family. Homodimers and heterodimers. As to expression, highly expressed in flowers. Expressed in roots and seedlings.

It is found in the nucleus. Aux/IAA proteins are short-lived transcriptional factors that function as repressors of early auxin response genes at low auxin concentrations. The chain is Auxin-responsive protein IAA25 (IAA25) from Oryza sativa subsp. japonica (Rice).